A 296-amino-acid chain; its full sequence is GTPase Era (296 aa).

The 168-residue stretch at 3–170 (KSGFVTIVGR…KELMFKYIPE (168 aa)) folds into the Era-type G domain. Residues 11–18 (GRPNVGKS) form a G1 region. Residue 11–18 (GRPNVGKS) coordinates GTP. The segment at 37–41 (QTTRN) is G2. Residues 58 to 61 (DTPG) are G3. Residues 58 to 62 (DTPGI) and 120 to 123 (NKID) contribute to the GTP site. Residues 120–123 (NKID) are G4. Residues 149-151 (ISA) are G5. Residues 201–278 (LSEEVPHGIA…YIRLWVKVKE (78 aa)) enclose the KH type-2 domain.

This sequence belongs to the TRAFAC class TrmE-Era-EngA-EngB-Septin-like GTPase superfamily. Era GTPase family. In terms of assembly, monomer.

The protein localises to the cytoplasm. It localises to the cell membrane. In terms of biological role, an essential GTPase that binds both GDP and GTP, with rapid nucleotide exchange. Plays a role in 16S rRNA processing and 30S ribosomal subunit biogenesis and possibly also in cell cycle regulation and energy metabolism. In Clostridium botulinum (strain Okra / Type B1), this protein is GTPase Era.